The chain runs to 260 residues: Phosphate import ATP-binding protein PstB 2 (260 aa).

The ABC transporter domain occupies 9-255; the sequence is IKVKDLSFYY…PLDSRTRDYV (247 aa). 41 to 48 provides a ligand contact to ATP; the sequence is GPSGCGKS.

It belongs to the ABC transporter superfamily. Phosphate importer (TC 3.A.1.7) family. The complex is composed of two ATP-binding proteins (PstB), two transmembrane proteins (PstC and PstA) and a solute-binding protein (PstS).

Its subcellular location is the cell inner membrane. It catalyses the reaction phosphate(out) + ATP + H2O = ADP + 2 phosphate(in) + H(+). Part of the ABC transporter complex PstSACB involved in phosphate import. Responsible for energy coupling to the transport system. This Nostoc sp. (strain PCC 7120 / SAG 25.82 / UTEX 2576) protein is Phosphate import ATP-binding protein PstB 2.